A 300-amino-acid chain; its full sequence is Protoheme IX farnesyltransferase (300 aa).

8 helical membrane passes run 24 to 44 (VTQL…PGMV), 46 to 66 (WHVL…AFAI), 94 to 114 (PQIL…LYTF), 118 to 138 (LTMW…TLLL), 146 to 166 (IVIG…AVTG), 172 to 192 (AWIL…VLAL), 224 to 244 (VILF…VVYL), and 278 to 298 (IVYL…RPLL).

This sequence belongs to the UbiA prenyltransferase family. Protoheme IX farnesyltransferase subfamily.

The protein resides in the cell inner membrane. The enzyme catalyses heme b + (2E,6E)-farnesyl diphosphate + H2O = Fe(II)-heme o + diphosphate. It participates in porphyrin-containing compound metabolism; heme O biosynthesis; heme O from protoheme: step 1/1. Converts heme B (protoheme IX) to heme O by substitution of the vinyl group on carbon 2 of heme B porphyrin ring with a hydroxyethyl farnesyl side group. This chain is Protoheme IX farnesyltransferase, found in Burkholderia ambifaria (strain MC40-6).